Consider the following 392-residue polypeptide: MATMQLRRTASMSALVFPNKISTEQQSLMFVKRLLAVSVSCITYLRGIFPERAYGTRYLDDLCVKILKEDKNCPGSSQLVKWMLGCYDALQKKYLRMIILAVYTNPEDPQTISECYQFKFKYTKNGPIMDFISKNQNNKSSTTSADTKKASILLIRKIYVLMQNLGPLPNDVCLTMKLFYYDEVTPPDYQPPGFKDGDCEGVIFDGDPTYLNVGEVPTPFHTFRLKVTTEKERMENIDSAILTPKDSKIPFQKILMDKDDVEDENHNNFDIKTKMNEQNENSGTSEIKEPNLDCKEEEIMQFKKNQSSSISQCQVEQLISKTSELDVSESKTRSGKIFQCKMVNGNQQGQISKENRKRSLRQSGKTVLHILESSSQESVLKRRRVSEPNEHT.

The HORMA domain maps to 25 to 227 (QQSLMFVKRL…TPFHTFRLKV (203 aa)). Disordered stretches follow at residues 271–292 (IKTK…EPNL) and 371–392 (LESS…NEHT). Ser374 carries the post-translational modification Phosphoserine. Residues 381–384 (KRRR) carry the Nuclear localization signal motif.

As to quaternary structure, interacts with HORMAD2. Interacts with IHO1. Post-translationally, phosphorylated at Ser-375 in a SPO11-dependent manner.

Its subcellular location is the nucleus. The protein resides in the chromosome. Its function is as follows. Plays a key role in meiotic progression. Regulates 3 different functions during meiosis: ensures that sufficient numbers of processed DNA double-strand breaks (DSBs) are available for successful homology search by increasing the steady-state numbers of single-stranded DSB ends. Promotes synaptonemal-complex formation independently of its role in homology search. Plays a key role in the male mid-pachytene checkpoint and the female meiotic prophase checkpoint: required for efficient build-up of ATR activity on unsynapsed chromosome regions, a process believed to form the basis of meiotic silencing of unsynapsed chromatin (MSUC) and meiotic prophase quality control in both sexes. In Rattus norvegicus (Rat), this protein is HORMA domain-containing protein 1 (Hormad1).